Here is a 352-residue protein sequence, read N- to C-terminus: N-acetyl-gamma-glutamyl-phosphate reductase (352 aa).

Cys155 is a catalytic residue.

It belongs to the NAGSA dehydrogenase family. Type 1 subfamily.

Its subcellular location is the cytoplasm. The enzyme catalyses N-acetyl-L-glutamate 5-semialdehyde + phosphate + NADP(+) = N-acetyl-L-glutamyl 5-phosphate + NADPH + H(+). It functions in the pathway amino-acid biosynthesis; L-arginine biosynthesis; N(2)-acetyl-L-ornithine from L-glutamate: step 3/4. Catalyzes the NADPH-dependent reduction of N-acetyl-5-glutamyl phosphate to yield N-acetyl-L-glutamate 5-semialdehyde. The sequence is that of N-acetyl-gamma-glutamyl-phosphate reductase from Synechococcus elongatus (strain ATCC 33912 / PCC 7942 / FACHB-805) (Anacystis nidulans R2).